A 282-amino-acid polypeptide reads, in one-letter code: Bifunctional protein FolD (282 aa).

NADP(+) is bound by residues 160–162, serine 185, and isoleucine 228; that span reads NRS.

This sequence belongs to the tetrahydrofolate dehydrogenase/cyclohydrolase family. In terms of assembly, homodimer.

It carries out the reaction (6R)-5,10-methylene-5,6,7,8-tetrahydrofolate + NADP(+) = (6R)-5,10-methenyltetrahydrofolate + NADPH. The enzyme catalyses (6R)-5,10-methenyltetrahydrofolate + H2O = (6R)-10-formyltetrahydrofolate + H(+). The protein operates within one-carbon metabolism; tetrahydrofolate interconversion. Functionally, catalyzes the oxidation of 5,10-methylenetetrahydrofolate to 5,10-methenyltetrahydrofolate and then the hydrolysis of 5,10-methenyltetrahydrofolate to 10-formyltetrahydrofolate. The sequence is that of Bifunctional protein FolD from Cenarchaeum symbiosum (strain A).